Consider the following 454-residue polypeptide: Bifunctional protein GlmU (454 aa).

The interval 1–228 (MTLPLHVVIL…PQDVEGANDP (228 aa)) is pyrophosphorylase. Residues 10 to 13 (LAAG), Lys-24, Gln-76, 81 to 82 (GT), 103 to 105 (YGD), Gly-138, Glu-153, Asn-168, and Asn-226 each bind UDP-N-acetyl-alpha-D-glucosamine. Residue Asp-105 coordinates Mg(2+). Residue Asn-226 participates in Mg(2+) binding. The tract at residues 229 to 249 (WQLAQLERAWQLRAARALCLQ) is linker. The interval 250-454 (GVRMADPARV…IEGWERPKKK (205 aa)) is N-acetyltransferase. Residues Arg-332 and Lys-350 each coordinate UDP-N-acetyl-alpha-D-glucosamine. Residue His-362 is the Proton acceptor of the active site. Positions 365 and 376 each coordinate UDP-N-acetyl-alpha-D-glucosamine. Residues Ala-379, 385-386 (NY), Ser-404, Ala-422, and Arg-439 contribute to the acetyl-CoA site.

This sequence in the N-terminal section; belongs to the N-acetylglucosamine-1-phosphate uridyltransferase family. The protein in the C-terminal section; belongs to the transferase hexapeptide repeat family. In terms of assembly, homotrimer. Requires Mg(2+) as cofactor.

The protein resides in the cytoplasm. It carries out the reaction alpha-D-glucosamine 1-phosphate + acetyl-CoA = N-acetyl-alpha-D-glucosamine 1-phosphate + CoA + H(+). The catalysed reaction is N-acetyl-alpha-D-glucosamine 1-phosphate + UTP + H(+) = UDP-N-acetyl-alpha-D-glucosamine + diphosphate. Its pathway is nucleotide-sugar biosynthesis; UDP-N-acetyl-alpha-D-glucosamine biosynthesis; N-acetyl-alpha-D-glucosamine 1-phosphate from alpha-D-glucosamine 6-phosphate (route II): step 2/2. It participates in nucleotide-sugar biosynthesis; UDP-N-acetyl-alpha-D-glucosamine biosynthesis; UDP-N-acetyl-alpha-D-glucosamine from N-acetyl-alpha-D-glucosamine 1-phosphate: step 1/1. It functions in the pathway bacterial outer membrane biogenesis; LPS lipid A biosynthesis. In terms of biological role, catalyzes the last two sequential reactions in the de novo biosynthetic pathway for UDP-N-acetylglucosamine (UDP-GlcNAc). The C-terminal domain catalyzes the transfer of acetyl group from acetyl coenzyme A to glucosamine-1-phosphate (GlcN-1-P) to produce N-acetylglucosamine-1-phosphate (GlcNAc-1-P), which is converted into UDP-GlcNAc by the transfer of uridine 5-monophosphate (from uridine 5-triphosphate), a reaction catalyzed by the N-terminal domain. The chain is Bifunctional protein GlmU from Xanthomonas campestris pv. campestris (strain 8004).